A 358-amino-acid chain; its full sequence is uncharacterized protein (358 aa).

Residues 1–15 (MITGKTISLPLSVIA) form the signal peptide. C16 is lipidated: N-palmitoyl cysteine. C16 carries S-diacylglycerol cysteine lipidation. Residues 331–358 (PCGTGSPGNPPPNINSVAQHRISTNTNR) are disordered. The span at 347 to 358 (VAQHRISTNTNR) shows a compositional bias: polar residues.

The protein localises to the cell membrane. This is an uncharacterized protein from Sinorhizobium fredii (strain NBRC 101917 / NGR234).